An 838-amino-acid polypeptide reads, in one-letter code: Protein P (838 aa).

The terminal protein domain (TP) stretch occupies residues 1-179 (MPLSYQHFRK…FCGSPYSWEQ (179 aa)). The segment at 180–341 (ELQHSQRHGD…YCLSHLVNLR (162 aa)) is spacer. Residues 219-245 (GLQPHQGPLASSQPGRSGSIRARAHPS) are disordered. A polymerase/reverse transcriptase domain (RT) region spans residues 342–685 (EDWGPCDDHG…YMNLYPVARQ (344 aa)). Residues 352-595 (EHHIRIPRTP…YSLNFMGYII (244 aa)) form the Reverse transcriptase domain. D424, D546, and D547 together coordinate Mg(2+).

Belongs to the hepadnaviridae P protein family.

The enzyme catalyses DNA(n) + a 2'-deoxyribonucleoside 5'-triphosphate = DNA(n+1) + diphosphate. It carries out the reaction Endonucleolytic cleavage to 5'-phosphomonoester.. Its activity is regulated as follows. Activated by host HSP70 and HSP40 in vitro to be able to bind the epsilon loop of the pgRNA. Because deletion of the RNase H region renders the protein partly chaperone-independent, the chaperones may be needed indirectly to relieve occlusion of the RNA-binding site by this domain. Inhibited by several reverse-transcriptase inhibitors: Lamivudine, Adefovir and Entecavir. Functionally, multifunctional enzyme that converts the viral RNA genome into dsDNA in viral cytoplasmic capsids. This enzyme displays a DNA polymerase activity that can copy either DNA or RNA templates, and a ribonuclease H (RNase H) activity that cleaves the RNA strand of RNA-DNA heteroduplexes in a partially processive 3'- to 5'-endonucleasic mode. Neo-synthesized pregenomic RNA (pgRNA) are encapsidated together with the P protein, and reverse-transcribed inside the nucleocapsid. Initiation of reverse-transcription occurs first by binding the epsilon loop on the pgRNA genome, and is initiated by protein priming, thereby the 5'-end of (-)DNA is covalently linked to P protein. Partial (+)DNA is synthesized from the (-)DNA template and generates the relaxed circular DNA (RC-DNA) genome. After budding and infection, the RC-DNA migrates in the nucleus, and is converted into a plasmid-like covalently closed circular DNA (cccDNA). The activity of P protein does not seem to be necessary for cccDNA generation, and is presumably released from (+)DNA by host nuclear DNA repair machinery. The sequence is that of Protein P from Hepatitis B virus genotype A2 subtype adw (isolate Japan/Nishioka/1983) (HBV-A).